We begin with the raw amino-acid sequence, 56 residues long: Large ribosomal subunit protein eL40 (56 aa).

The protein belongs to the eukaryotic ribosomal protein eL40 family.

This is Large ribosomal subunit protein eL40 from Sulfurisphaera tokodaii (strain DSM 16993 / JCM 10545 / NBRC 100140 / 7) (Sulfolobus tokodaii).